We begin with the raw amino-acid sequence, 121 residues long: MTTSSPTATTAQAHGRFIRGSVSKVRRVLDQIRGRTYRDALIMLEFMPYRSTGPITKVLRSAVANAEHNLGLDPASLIISQATADMGPSMKRYRPRAQGRAYAIKKQTCHISIAVAAQTDS.

This sequence belongs to the universal ribosomal protein uL22 family. As to quaternary structure, part of the 50S ribosomal subunit.

Functionally, this protein binds specifically to 23S rRNA; its binding is stimulated by other ribosomal proteins, e.g. L4, L17, and L20. It is important during the early stages of 50S assembly. It makes multiple contacts with different domains of the 23S rRNA in the assembled 50S subunit and ribosome. Its function is as follows. The globular domain of the protein is located near the polypeptide exit tunnel on the outside of the subunit, while an extended beta-hairpin is found that lines the wall of the exit tunnel in the center of the 70S ribosome. This is Large ribosomal subunit protein uL22 from Synechococcus sp. (strain CC9311).